The sequence spans 189 residues: Putative lipoprotein LppK (189 aa).

An N-terminal signal peptide occupies residues 1–22 (MRRNIRVTLGAATIVAALGLSG). A lipid anchor (N-palmitoyl cysteine) is attached at Cys23. Cys23 carries S-diacylglycerol cysteine lipidation. Disordered stretches follow at residues 26-49 (PEFK…LEAA) and 166-189 (MGNS…TPPG). Residues 169–179 (SPDSTPSATSP) are compositionally biased toward low complexity. The span at 180-189 (APAPSPTPPG) shows a compositional bias: pro residues.

This sequence belongs to the MTB12 family.

The protein localises to the cell membrane. The polypeptide is Putative lipoprotein LppK (lppK) (Mycobacterium tuberculosis (strain CDC 1551 / Oshkosh)).